Reading from the N-terminus, the 219-residue chain is Peroxiredoxin-5, mitochondrial (219 aa).

The N-terminal 57 residues, 1 to 57 (MRLGWLRVLGCRPGSVVSRATIVEGASTTAAGTRGCLEGILEWTFGGVRGFRSAAVA), are a transit peptide targeting the mitochondrion. One can recognise a Thioredoxin domain in the interval 61-219 (IKVGDAIPSV…SLAPNILSQL (159 aa)). K80 is subject to N6-acetyllysine. K88 carries the post-translational modification N6-acetyllysine; alternate. Residue K88 is modified to N6-succinyllysine; alternate. C105 functions as the Cysteine sulfenic acid (-SOH) intermediate in the catalytic mechanism. C105 is lipidated: S-palmitoyl cysteine. Residues C105 and C209 are joined by a disulfide bond. K121 carries the post-translational modification N6-succinyllysine. Residue S187 is modified to Phosphoserine. Residues 217-219 (SQL) carry the Microbody targeting signal motif.

The protein belongs to the peroxiredoxin family. Prx5 subfamily. As to quaternary structure, monomer. S-palmitoylated. Palmitoylation occurs on the active site, inhibiting its reactivity; therefore PRDX5 palmitoylation status determines its antioxidant capacity. In terms of processing, S-palmitoylated. Depalmitoylated by ABHD10.

It localises to the mitochondrion. Its subcellular location is the cytoplasm. The protein localises to the peroxisome matrix. It carries out the reaction a hydroperoxide + [thioredoxin]-dithiol = an alcohol + [thioredoxin]-disulfide + H2O. Functionally, thiol-specific peroxidase that catalyzes the reduction of hydrogen peroxide and organic hydroperoxides to water and alcohols, respectively. Plays a role in cell protection against oxidative stress by detoxifying peroxides and as sensor of hydrogen peroxide-mediated signaling events. This Bos taurus (Bovine) protein is Peroxiredoxin-5, mitochondrial (PRDX5).